A 173-amino-acid chain; its full sequence is ATP synthase subunit b (173 aa).

Residues 19–39 (IVWSLIILVIVAVFFYKFFMP) traverse the membrane as a helical segment.

It belongs to the ATPase B chain family. F-type ATPases have 2 components, F(1) - the catalytic core - and F(0) - the membrane proton channel. F(1) has five subunits: alpha(3), beta(3), gamma(1), delta(1), epsilon(1). F(0) has three main subunits: a(1), b(2) and c(10-14). The alpha and beta chains form an alternating ring which encloses part of the gamma chain. F(1) is attached to F(0) by a central stalk formed by the gamma and epsilon chains, while a peripheral stalk is formed by the delta and b chains.

The protein resides in the cell membrane. F(1)F(0) ATP synthase produces ATP from ADP in the presence of a proton or sodium gradient. F-type ATPases consist of two structural domains, F(1) containing the extramembraneous catalytic core and F(0) containing the membrane proton channel, linked together by a central stalk and a peripheral stalk. During catalysis, ATP synthesis in the catalytic domain of F(1) is coupled via a rotary mechanism of the central stalk subunits to proton translocation. Functionally, component of the F(0) channel, it forms part of the peripheral stalk, linking F(1) to F(0). The polypeptide is ATP synthase subunit b (Bifidobacterium longum (strain NCC 2705)).